Consider the following 347-residue polypeptide: Peptidoglycan recognition protein 3 (347 aa).

Residues 1-26 (MLVSWDHPKMLPRLLGFLALSLLACG) form the signal peptide. N-acetylmuramoyl-L-alanine amidase domains lie at 77-185 (LQSQ…KACP) and 206-328 (PAKF…VSNI). A glycan (N-linked (GlcNAc...) asparagine) is linked at Asn-120. 3 disulfide bridges follow: Cys-184/Cys-306, Cys-200/Cys-244, and Cys-220/Cys-226. Positions 237 and 248 each coordinate peptidoglycan. Positions 270 to 275 (HTYGYN) are interaction with murein.

Belongs to the N-acetylmuramoyl-L-alanine amidase 2 family. Monomer. Homodimer; disulfide-linked. Heterodimer with PGLYRP4; disulfide-linked. In terms of tissue distribution, detected in lung, spleen and stomach, and at low levels in eye, heart, thymus and testis.

It is found in the secreted. Pattern receptor that binds to murein peptidoglycans (PGN) of Gram-positive bacteria. Has bactericidal activity towards Gram-positive bacteria. May kill Gram-positive bacteria by interfering with peptidoglycan biosynthesis. Also binds to Gram-negative bacteria, and has bacteriostatic activity towards Gram-negative bacteria. Plays a role in innate immunity. In Mus musculus (Mouse), this protein is Peptidoglycan recognition protein 3 (Pglyrp3).